A 359-amino-acid polypeptide reads, in one-letter code: WD repeat-containing protein 89 homolog (359 aa).

WD repeat units follow at residues Ile23–Val62, Gly65–Thr104, Asn106–Asp144, Ser146–Ala186, Asn192–His232, and Val294–Leu333.

The protein is WD repeat-containing protein 89 homolog (wdr89) of Dictyostelium discoideum (Social amoeba).